Reading from the N-terminus, the 91-residue chain is Potassium channel toxin MeuTXK-beta-1 (91 aa).

The N-terminal stretch at 1-19 (MQRNLVVLLFLGMVALSSC) is a signal peptide. The BetaSPN-type CS-alpha/beta domain maps to 54–91 (QFGCPAYQGYCDDHCQDIEKKEGFCHGFKCKCGIPMGF). 3 disulfide bridges follow: Cys-57/Cys-78, Cys-64/Cys-83, and Cys-68/Cys-85.

As to expression, expressed by the venom gland.

Its subcellular location is the secreted. Functionally, has a low affinity binding to potassium channels of rat brain synaptosomes. Displays weak antibacterial activity against Stenotrophomonas sp. Strongly inhibits the development of the Plasmodium berghei ookinetes. Displays slight hemolytic effect on mouse erythrocytes. Induces cytolysis on Xenopus oocytes at high concentrations. Is not toxic towards mice and towards the insect Tenebrio molitor. The sequence is that of Potassium channel toxin MeuTXK-beta-1 from Mesobuthus eupeus (Lesser Asian scorpion).